The sequence spans 188 residues: Protein-export protein SecB (188 aa).

Disordered stretches follow at residues 1 to 21 (MADE…EQPK) and 160 to 188 (RQKA…DTQQ). Over residues 176–188 (SDSTAAQGSDTQQ) the composition is skewed to polar residues.

The protein belongs to the SecB family. In terms of assembly, homotetramer, a dimer of dimers. One homotetramer interacts with 1 SecA dimer.

It localises to the cytoplasm. One of the proteins required for the normal export of preproteins out of the cell cytoplasm. It is a molecular chaperone that binds to a subset of precursor proteins, maintaining them in a translocation-competent state. It also specifically binds to its receptor SecA. This Alkalilimnicola ehrlichii (strain ATCC BAA-1101 / DSM 17681 / MLHE-1) protein is Protein-export protein SecB.